An 84-amino-acid polypeptide reads, in one-letter code: MKGMILFISCILLIGIVVECKEGYLMDHEGCKLSCFIRPSGYCGRECAIKKGSSGYCAWPACYCYGLPNWVKVWERATNRCGKK.

An N-terminal signal peptide occupies residues 1–20; sequence MKGMILFISCILLIGIVVEC. Residues 21-82 form the LCN-type CS-alpha/beta domain; it reads KEGYLMDHEG…VWERATNRCG (62 aa). 4 disulfides stabilise this stretch: cysteine 31-cysteine 81, cysteine 35-cysteine 57, cysteine 43-cysteine 62, and cysteine 47-cysteine 64. A Cysteine amide modification is found at cysteine 81.

The protein belongs to the long (4 C-C) scorpion toxin superfamily. Sodium channel inhibitor family. Beta subfamily. In terms of tissue distribution, expressed by the venom gland.

Its subcellular location is the secreted. In terms of biological role, beta toxins modify sodium channel function in two ways: an excitatory effect (shifting the activation process to more negative potential) and/or a depressant effect (reducing the peak current). At concentration of 500 nM this toxin produces channel opening at more negative potentials in hNav1.2/SCN2A and hNav1.3/SCN3A, which shows the biggest effect. On the other hand the peak current is decreased in hNav1.4/SCN4A and hNav1.5/SCN5A channels, without apparent modification of the activation gate. This toxin is active against mammals. The sequence is that of Beta-mammal Tt1g from Tityus trivittatus (Argentinean scorpion).